The chain runs to 180 residues: Insulin-like growth factor 2 (180 aa).

Residues 1-24 form the signal peptide; that stretch reads MGIPVGKSMLVLLISLAFALCCIA. The interval 25–52 is b; sequence AYGPGETLCGGELVDTLQFVCSDRGFYF. 3 disulfides stabilise this stretch: C33–C71, C45–C84, and C70–C75. Residues 53 to 64 form a c region; sequence SRPSSRANRRSR. Residues 65–85 are a; that stretch reads GIVEECCFRSCDLALLETYCA. The tract at residues 86–91 is d; the sequence is TPAKSE. Residues 92–180 constitute a propeptide, e peptide; sequence RDVSTSQAVL…ASSEMSSNHQ (89 aa). Positions 157–180 are disordered; it reads PLIVLPPKDPAHGGASSEMSSNHQ.

The protein belongs to the insulin family. As to quaternary structure, interacts with MYORG; this interaction is required for IGF2 secretion. Interacts with integrins ITGAV:ITGB3 and ITGA6:ITGB4; integrin-binding is required for IGF2 signaling. Interacts with IGFBP2. Post-translationally, proteolytically processed by PCSK4, proIGF2 is cleaved at Arg-128 and Arg-92 to generate big-IGF2 and mature IGF2. In terms of tissue distribution, expressed in the heart, blood serum, kidney and skeletal muscle including the tibialis anterior muscle.

Its subcellular location is the secreted. Functionally, the insulin-like growth factors possess growth-promoting activity. Major fetal growth hormone in mammals. Plays a key role in regulating fetoplacental development. IGF2 is influenced by placental lactogen. Also involved in tissue differentiation. In adults, involved in glucose metabolism in adipose tissue, skeletal muscle and liver. Acts as a ligand for integrin which is required for IGF2 signaling. Positively regulates myogenic transcription factor MYOD1 function by facilitating the recruitment of transcriptional coactivators, thereby controlling muscle terminal differentiation. Inhibits myoblast differentiation and modulates metabolism via increasing the mitochondrial respiration rate. Preptin undergoes glucose-mediated co-secretion with insulin, and acts as a physiological amplifier of glucose-mediated insulin secretion. Exhibits osteogenic properties by increasing osteoblast mitogenic activity through phosphoactivation of MAPK1 and MAPK3. The protein is Insulin-like growth factor 2 of Mus musculus (Mouse).